The following is an 85-amino-acid chain: Putative membrane protein insertion efficiency factor (85 aa).

The protein belongs to the UPF0161 family.

The protein localises to the cell inner membrane. In terms of biological role, could be involved in insertion of integral membrane proteins into the membrane. The protein is Putative membrane protein insertion efficiency factor of Phenylobacterium zucineum (strain HLK1).